Reading from the N-terminus, the 117-residue chain is Venom nerve growth factor (117 aa).

3 disulfides stabilise this stretch: C12–C77, C55–C105, and C65–C107. The N-linked (GlcNAc...) asparagine glycan is linked to N21.

Belongs to the NGF-beta family. Homodimer; non-covalently linked. Expressed by the venom gland.

It is found in the secreted. Functionally, nerve growth factor is important for the development and maintenance of the sympathetic and sensory nervous systems. It stimulates division and differentiation of sympathetic and embryonic sensory neurons as well as basal forebrain cholinergic neurons in the brain. Its relevance in the snake venom is not clear. However, it has been shown to inhibit metalloproteinase-dependent proteolysis of platelet glycoprotein Ib alpha, suggesting a metalloproteinase inhibition to prevent metalloprotease autodigestion and/or protection against prey proteases. Binds a lipid between the two protein chains in the homodimer. The lipid-bound form promotes histamine relase from mouse mast cells, contrary to the lipid-free form. In Daboia russelii (Russel's viper), this protein is Venom nerve growth factor.